The following is a 199-amino-acid chain: Recombination protein RecR (199 aa).

The segment at 58–73 (CSRCFYFTEEDPCPLC) adopts a C4-type zinc-finger fold. The Toprim domain occupies 81–176 (QLICVVEEPQ…KVTRLAHGIP (96 aa)).

Belongs to the RecR family.

Its function is as follows. May play a role in DNA repair. It seems to be involved in an RecBC-independent recombinational process of DNA repair. It may act with RecF and RecO. The sequence is that of Recombination protein RecR from Syntrophotalea carbinolica (strain DSM 2380 / NBRC 103641 / GraBd1) (Pelobacter carbinolicus).